Reading from the N-terminus, the 731-residue chain is EF-hand calcium-binding domain-containing protein 4B (731 aa).

Residues 1 to 45 (MAAPDGRVVSRPQRLGQGSGQGPKGSGACLHPLDSLEQKETQEQT) are disordered. An EF-hand domain is found at 84 to 119 (LSLEELEDVFDALDADGNGYLTPQEFTTGFSHFFFS). Ca(2+) is bound by residues Asp97, Asp99, Asn101, Tyr103, and Glu108. The stretch at 201 to 382 (LTRIISQLQE…RERNKHLRDE (182 aa)) forms a coiled coil. A proline-rich domain (PRD) which mediates interaction with VAV1 region spans residues 349–540 (MEVYRVTESL…ALCKEESSPS (192 aa)). Disordered regions lie at residues 426 to 466 (SEEE…PYPR) and 494 to 528 (CSEE…QPVG). Residues Ser554, Val556, Gly557, Lys558, Thr559, Ser560, Ser571, Pro572, and Thr577 each coordinate GTP. Residue Thr559 coordinates Mg(2+). The switch-I stretch occupies residues 572-580 (PGMAATVGI). Residues Thr577 and Asp600 each coordinate Mg(2+). GTP is bound by residues Gly603, Asn658, Lys659, Asp661, and Ala689. A switch-II region spans residues 603-619 (GQERYRCITQQFFRKAD). Cys729 carries the S-geranylgeranyl cysteine lipid modification.

Belongs to the EFCAB4 family. Interacts with ORAI1 and STIM1; the interaction is direct and takes place in absence of Ca(2+). Forms a complex with ORAI1 and STIM1 at low concentration of Ca(2+), the complex dissociates at elevated Ca(2+) concentrations. Interacts with ORAI2 and ORAI3. In terms of assembly, interacts with DYNC1H1. Interacts with the dynein-dynactin complex in a Ca(2+)-dependent manner. Interacts with VAV1. Mg(2+) is required as a cofactor. Expressed in the Jurkat T-cell line. In terms of tissue distribution, expressed in endothelial cells. Expressed in Weibel-Palade bodies (which are P-selectin/SELP negative) in endothelial cells. Expressed in the Jurkat T-cell line.

The protein localises to the cytoplasm. The protein resides in the cytoskeleton. It is found in the microtubule organizing center. It localises to the cell membrane. Its subcellular location is the golgi apparatus membrane. The protein localises to the golgi apparatus. The protein resides in the trans-Golgi network membrane. It is found in the vesicle. The enzyme catalyses GTP + H2O = GDP + phosphate + H(+). Ca(2+)-binding protein that plays a key role in store-operated Ca(2+) entry (SOCE) in T-cells by regulating CRAC channel activation. Acts as a cytoplasmic calcium-sensor that facilitates the clustering of ORAI1 and STIM1 at the junctional regions between the plasma membrane and the endoplasmic reticulum upon low Ca(2+) concentration. It thereby regulates CRAC channel activation, including translocation and clustering of ORAI1 and STIM1. Upon increase of cytoplasmic Ca(2+) resulting from opening of CRAC channels, dissociates from ORAI1 and STIM1, thereby destabilizing the ORAI1-STIM1 complex. Functionally, rab GTPase that mediates the trafficking of Weibel-Palade bodies (WPBs) to microtubule organizing center (MTOC) in endothelial cells in response to acute inflammatory stimuli. During histamine (but not thrombin) stimulation of endothelial cells, the dynein-bound form induces retrograde transport of a subset of WPBs along microtubules to the MTOC in a Ca(2+)-independent manner and its GTPase activity is essential for this function. Ca(2+)-regulated dynein adapter protein that activates dynein-mediated transport and dynein-dynactin motility on microtubules and regulates endosomal trafficking of CD47. Acts as an intracellular signaling module bridging two important T-cell receptor (TCR) signaling pathways, Ca(2+)-NFAT and JNK, to affect T-cell activation. In resting T-cells, is predominantly localized near TGN network in a GTP-bound form, upon TCR stimulation, localizes at the immunological synapse via interaction with VAV1 to activate downstream Ca(2+)-NFAT and JNK signaling pathways. Plays a role in T-helper 1 (Th1) cell differentiation and T-helper 17 (Th17) cell effector function. Plays a role in store-operated Ca(2+) entry (SOCE) in T-cells by regulating CRAC channel activation. This chain is EF-hand calcium-binding domain-containing protein 4B, found in Homo sapiens (Human).